Consider the following 788-residue polypeptide: LPS-assembly protein LptD (788 aa).

The first 24 residues, 1 to 24 (MKKRFPTLLATLIWTALYSQHTLA), serve as a signal peptide directing secretion.

It belongs to the LptD family. As to quaternary structure, component of the lipopolysaccharide transport and assembly complex. Interacts with LptE and LptA.

It localises to the cell outer membrane. Its function is as follows. Together with LptE, is involved in the assembly of lipopolysaccharide (LPS) at the surface of the outer membrane. The polypeptide is LPS-assembly protein LptD (Yersinia enterocolitica serotype O:8 / biotype 1B (strain NCTC 13174 / 8081)).